The chain runs to 285 residues: MSQQRPARKLPSLLVDPAEETVRRRCRDPINVEGLLPSKIRINLEDNVQYVSMRKALKVKRPRFDVSLVYLTRKFMDLVRSAPGGILDLNKVATKLGVRKRRVYDITNVLDGIDLVEKKSKNHIRWIGSDLSNFGAVPQQKKLQEELSDLSAMEDALDELIKDCAQQLFELTDDKENERLAYVTYQDIHSIQAFHEQIVIAVKAPAETRLDVPAPKEDSITVHIRSTKGPIDVYLCEVEQGSHSSNKTSDNVGTSSSKSKPLEHPQPEKEENPPQQSEEVLEVSN.

Residue Lys9 forms a Glycyl lysine isopeptide (Lys-Gly) (interchain with G-Cter in SUMO2) linkage. Residues 50–129 mediate DNA binding; that stretch reads YVSMRKALKV…SKNHIRWIGS (80 aa). A DEF box motif is present at residues 95-129; that stretch reads KLGVRKRRVYDITNVLDGIDLVEKKSKNHIRWIGS. The tract at residues 130-222 is dimerization; sequence DLSNFGAVPQ…PAPKEDSITV (93 aa). Residues 143-164 are leucine-zipper; sequence LQEELSDLSAMEDALDELIKDC. The transcription repression stretch occupies residues 173–285; it reads DDKENERLAY…QSEEVLEVSN (113 aa). The segment at 240–285 is disordered; the sequence is QGSHSSNKTSDNVGTSSSKSKPLEHPQPEKEENPPQQSEEVLEVSN. Residues 241–259 are compositionally biased toward polar residues; the sequence is GSHSSNKTSDNVGTSSSKS. Positions 260–272 are enriched in basic and acidic residues; sequence KPLEHPQPEKEEN.

Belongs to the E2F/DP family. Forms heterodimers with DP family members TFDP1 or TFDP2. Component of the DRTF1/E2F transcription factor complex. Part of the E2F6.com-1 complex in G0 phase composed of E2F6, MGA, MAX, TFDP1, CBX3, BAT8, EUHMTASE1, RING1, RNF2, MBLR, L3MBTL2 and YAF2. Component of some MLL1/MLL complex, at least composed of the core components KMT2A/MLL1, ASH2L, HCFC1/HCF1, WDR5 and RBBP5, as well as the facultative components BACC1, CHD8, E2F6, HSP70, INO80C, KANSL1, LAS1L, MAX, MCRS1, MGA, KAT8/MOF, PELP1, PHF20, PRP31, RING2, RUVB1/TIP49A, RUVB2/TIP49B, SENP3, TAF1, TAF4, TAF6, TAF7, TAF9 and TEX10.

Its subcellular location is the nucleus. Inhibitor of E2F-dependent transcription. Binds DNA cooperatively with DP proteins through the E2 recognition site, 5'-TTTC[CG]CGC-3'. Has a preference for the 5'-TTTCCCGC-3' E2F recognition site. E2F6 lacks the transcriptional activation and pocket protein binding domains. Appears to regulate a subset of E2F-dependent genes whose products are required for entry into the cell cycle but not for normal cell cycle progression. Represses expression of some meiosis-specific genes, including SLC25A31/ANT4. May silence expression via the recruitment of a chromatin remodeling complex containing histone H3-K9 methyltransferase activity. Overexpression delays the exit of cells from the S-phase. In Bos taurus (Bovine), this protein is Transcription factor E2F6.